A 227-amino-acid polypeptide reads, in one-letter code: Cytochrome c oxidase subunit 2 (227 aa).

The Mitochondrial intermembrane segment spans residues 1 to 14; the sequence is MAYPFQLGLQDATS. A helical transmembrane segment spans residues 15-45; that stretch reads PIMEELLHFHDHTLMIVFLISSLVLYIISLM. Residues 46 to 59 lie on the Mitochondrial matrix side of the membrane; the sequence is LTTKLTHTSTMDAQ. A helical transmembrane segment spans residues 60-87; it reads EVETVWTILPAIILILIALPSLRILYMM. Residues 88-227 lie on the Mitochondrial intermembrane side of the membrane; sequence DEINNPSLTV…YFETWSAVMV (140 aa). Cu cation-binding residues include His161, Cys196, Glu198, Cys200, His204, and Met207. Glu198 serves as a coordination point for Mg(2+). Tyr218 is subject to Phosphotyrosine.

Belongs to the cytochrome c oxidase subunit 2 family. As to quaternary structure, component of the cytochrome c oxidase (complex IV, CIV), a multisubunit enzyme composed of 14 subunits. The complex is composed of a catalytic core of 3 subunits MT-CO1, MT-CO2 and MT-CO3, encoded in the mitochondrial DNA, and 11 supernumerary subunits COX4I, COX5A, COX5B, COX6A, COX6B, COX6C, COX7A, COX7B, COX7C, COX8 and NDUFA4, which are encoded in the nuclear genome. The complex exists as a monomer or a dimer and forms supercomplexes (SCs) in the inner mitochondrial membrane with NADH-ubiquinone oxidoreductase (complex I, CI) and ubiquinol-cytochrome c oxidoreductase (cytochrome b-c1 complex, complex III, CIII), resulting in different assemblies (supercomplex SCI(1)III(2)IV(1) and megacomplex MCI(2)III(2)IV(2)). Found in a complex with TMEM177, COA6, COX18, COX20, SCO1 and SCO2. Interacts with TMEM177 in a COX20-dependent manner. Interacts with COX20. Interacts with COX16. Cu cation serves as cofactor.

The protein localises to the mitochondrion inner membrane. It catalyses the reaction 4 Fe(II)-[cytochrome c] + O2 + 8 H(+)(in) = 4 Fe(III)-[cytochrome c] + 2 H2O + 4 H(+)(out). In terms of biological role, component of the cytochrome c oxidase, the last enzyme in the mitochondrial electron transport chain which drives oxidative phosphorylation. The respiratory chain contains 3 multisubunit complexes succinate dehydrogenase (complex II, CII), ubiquinol-cytochrome c oxidoreductase (cytochrome b-c1 complex, complex III, CIII) and cytochrome c oxidase (complex IV, CIV), that cooperate to transfer electrons derived from NADH and succinate to molecular oxygen, creating an electrochemical gradient over the inner membrane that drives transmembrane transport and the ATP synthase. Cytochrome c oxidase is the component of the respiratory chain that catalyzes the reduction of oxygen to water. Electrons originating from reduced cytochrome c in the intermembrane space (IMS) are transferred via the dinuclear copper A center (CU(A)) of subunit 2 and heme A of subunit 1 to the active site in subunit 1, a binuclear center (BNC) formed by heme A3 and copper B (CU(B)). The BNC reduces molecular oxygen to 2 water molecules using 4 electrons from cytochrome c in the IMS and 4 protons from the mitochondrial matrix. The protein is Cytochrome c oxidase subunit 2 (MT-CO2) of Lycalopex culpaeus (Culpeo fox).